Here is a 231-residue protein sequence, read N- to C-terminus: Inner membrane protein YohK (231 aa).

Position 1 (M1) is a topological domain, periplasmic. The helical transmembrane segment at 2–22 threads the bilayer; it reads MANIWWSLPLTLIVFFAARKL. Topologically, residues 23-29 are cytoplasmic; that stretch reads AARYKFP. Residues 30 to 50 form a helical membrane-spanning segment; it reads LLNPLLVAMVVIIPFLMLTGI. At 51-90 the chain is on the periplasmic side; it reads SYDSYFKGSEVLNDLLQPAVVALAYPLYEQLHQIRARWKS. A helical transmembrane segment spans residues 91 to 111; the sequence is IITICFIGSVVAMVTGTSVAL. Topologically, residues 112–118 are cytoplasmic; sequence LMGASPE. 2 consecutive transmembrane segments (helical) span residues 119–139 and 140–160; these read IAAS…VGGS and IGGI…LGAV. Topologically, residues 161 to 208 are cytoplasmic; sequence FGHTLLNAMRIRTKAARGLAMGTASHALGTARCAELDYQEGAFSSLAL. A helical transmembrane segment spans residues 209 to 229; the sequence is VLCGIITSLIAPFLFPIILAV. Over 230-231 the chain is Periplasmic; the sequence is MG.

This sequence belongs to the YohK (E.coli)/YwbG (IPA-22R) (B.subtilis) family.

The protein resides in the cell inner membrane. This Escherichia coli (strain K12) protein is Inner membrane protein YohK (yohK).